Reading from the N-terminus, the 134-residue chain is Protein dpy-30 homolog (134 aa).

Residues 1–81 are disordered; the sequence is MEAKTDAPIS…ETNNMPTRQY (81 aa). The segment covering 31–68 has biased composition (low complexity); sequence AQANPTAAPGAPPSGAIAVGQSTNPVAQQQQQPAVAKK. Polar residues predominate over residues 71–81; that stretch reads SETNNMPTRQY.

It belongs to the dpy-30 family. As to quaternary structure, core component of several methyltransferase-containing complexes. Component of the SET1 complex, composed at least of the catalytic subunit Set1, wds/WDR5, Wdr82, Rbbp5, ash2, Cfp1/CXXC1, hcf and Dpy-30L1. Component of the MLL3/4 complex composed at least of the catalytic subunit trr, ash2, Rbbp5, Dpy-30L1, wds, hcf, ptip, Pa1, Utx, Lpt and Ncoa6. In terms of tissue distribution, expressed in larval brain, gonad, imaginal disk and salivary gland and in adult brain, testis, ovary and salivary gland.

It localises to the nucleus. In terms of biological role, component of the SET1 complex that specifically di- and trimethylates 'Lys-4' of histone H3 and of the MLL3/4 complex which also methylates histone H3 'Lys-4'. Inhibits MTF-1 transcription factor activity. This chain is Protein dpy-30 homolog, found in Drosophila melanogaster (Fruit fly).